A 1058-amino-acid polypeptide reads, in one-letter code: Protein translocase subunit SECA2, chloroplastic (1058 aa).

A chloroplast-targeting transit peptide spans 1 to 58; the sequence is MGSVSNLVSPNICHPAPPCLTSRSNKFPWTKPISGLLFYRSVTPIKRCHLVRRSCVVS. 167–174 contributes to the ATP binding site; the sequence is MKTGEGKT.

Belongs to the SecA family. As to quaternary structure, part of a second Sec protein translocation apparatus. Interacts probably with SCY2.

It is found in the plastid. Its subcellular location is the chloroplast membrane. It catalyses the reaction ATP + H2O + chloroplast-proteinSide 1 = ADP + phosphate + chloroplast-proteinSide 2.. In terms of biological role, involved in protein export. Probably interacts with other proteins to allow the postimport or conservative sorting pathway for inner membrane proteins in plastids. May have a central role in coupling the hydrolysis of ATP to the transfer of proteins across the membrane. In Arabidopsis thaliana (Mouse-ear cress), this protein is Protein translocase subunit SECA2, chloroplastic.